The following is a 182-amino-acid chain: Adenine phosphoribosyltransferase (182 aa).

This sequence belongs to the purine/pyrimidine phosphoribosyltransferase family. In terms of assembly, homodimer.

It localises to the cytoplasm. The enzyme catalyses AMP + diphosphate = 5-phospho-alpha-D-ribose 1-diphosphate + adenine. It participates in purine metabolism; AMP biosynthesis via salvage pathway; AMP from adenine: step 1/1. Catalyzes a salvage reaction resulting in the formation of AMP, that is energically less costly than de novo synthesis. This Campylobacter hominis (strain ATCC BAA-381 / DSM 21671 / CCUG 45161 / LMG 19568 / NCTC 13146 / CH001A) protein is Adenine phosphoribosyltransferase.